The chain runs to 57 residues: Large ribosomal subunit protein bL32 (57 aa).

This sequence belongs to the bacterial ribosomal protein bL32 family.

This chain is Large ribosomal subunit protein bL32, found in Shouchella clausii (strain KSM-K16) (Alkalihalobacillus clausii).